Reading from the N-terminus, the 233-residue chain is Flagellar calcium-binding protein TB-17 (233 aa).

Polar residues predominate over residues 1 to 11; it reads MGCSGSKNASN. Positions 1–29 are disordered; that stretch reads MGCSGSKNASNPKDGAASKGGKDGKTTAD. Residues 20-29 show a composition bias toward basic and acidic residues; sequence GGKDGKTTAD. 3 consecutive EF-hand domains span residues 48 to 83, 130 to 165, and 167 to 202; these read ESKSRRIELFKQFDTNGTGKLGFREVLDGCYSILKL, YDIFELTVIFDTMDKDGSLLLELHEFKEALPKLKEW, and VDITDATTVFNEIDTNGSGVVTFDEFSCWAVTKKLQ. The Ca(2+) site is built by D61, N63, T65, K67, E72, D143, D145, S147, E154, D180, N182, S184, and E191. The disordered stretch occupies residues 203–233; that stretch reads VSGDPDDEENGANEGDGANAGDGVPAAEGSA. A compositionally biased stretch (low complexity) spans 214-225; that stretch reads ANEGDGANAGDG.

Belongs to the calflagin family.

It localises to the cell projection. The protein resides in the cilium. Its subcellular location is the flagellum. May contribute to the rapid motility of the trypanosomes, playing a role either in flagellar structure or in calcium metabolism. Could alternate between a GDP-bound inactive form to a calcium/GTP-bound active form. This Trypanosoma brucei brucei protein is Flagellar calcium-binding protein TB-17 (FCABP).